Here is a 165-residue protein sequence, read N- to C-terminus: Small ribosomal subunit protein uS17c (165 aa).

The transit peptide at 1 to 57 directs the protein to the chloroplast; it reads MSLSFSLLKPPLSSSNPNPFLHGTTTKLSLLPSFSALSLSSSPPSSSTTYTFPVIKA. Positions 128–165 are disordered; the sequence is AVAPEGRQSSATRPKPIQAASDELGIPLESQVEGDKTV.

In terms of assembly, component of the chloroplast small ribosomal subunit (SSU). Mature 70S chloroplast ribosomes of higher plants consist of a small (30S) and a large (50S) subunit. The 30S small subunit contains 1 molecule of ribosomal RNA (16S rRNA) and 24 different proteins. The 50S large subunit contains 3 rRNA molecules (23S, 5S and 4.5S rRNA) and 33 different proteins.

It is found in the plastid. The protein resides in the chloroplast. Functionally, component of the chloroplast ribosome (chloro-ribosome), a dedicated translation machinery responsible for the synthesis of chloroplast genome-encoded proteins, including proteins of the transcription and translation machinery and components of the photosynthetic apparatus. The chain is Small ribosomal subunit protein uS17c (RPS17) from Spinacia oleracea (Spinach).